The chain runs to 414 residues: Serine hydroxymethyltransferase (414 aa).

(6S)-5,6,7,8-tetrahydrofolate contacts are provided by residues L121 and G125–L127. K229 carries the post-translational modification N6-(pyridoxal phosphate)lysine.

The protein belongs to the SHMT family. Homodimer. It depends on pyridoxal 5'-phosphate as a cofactor.

It localises to the cytoplasm. It carries out the reaction (6R)-5,10-methylene-5,6,7,8-tetrahydrofolate + glycine + H2O = (6S)-5,6,7,8-tetrahydrofolate + L-serine. Its pathway is one-carbon metabolism; tetrahydrofolate interconversion. The protein operates within amino-acid biosynthesis; glycine biosynthesis; glycine from L-serine: step 1/1. Functionally, catalyzes the reversible interconversion of serine and glycine with tetrahydrofolate (THF) serving as the one-carbon carrier. This reaction serves as the major source of one-carbon groups required for the biosynthesis of purines, thymidylate, methionine, and other important biomolecules. Also exhibits THF-independent aldolase activity toward beta-hydroxyamino acids, producing glycine and aldehydes, via a retro-aldol mechanism. The polypeptide is Serine hydroxymethyltransferase (Janthinobacterium sp. (strain Marseille) (Minibacterium massiliensis)).